Consider the following 149-residue polypeptide: uncharacterized protein (149 aa).

Helical transmembrane passes span 39-61, 82-104, and 119-141; these read VPLG…LIIG, VFGY…GAIL, and WMMM…SIYL.

It to M.pneumoniae MPN_090.

It is found in the cell membrane. This is an uncharacterized protein from Mycoplasma pneumoniae (strain ATCC 29342 / M129 / Subtype 1) (Mycoplasmoides pneumoniae).